We begin with the raw amino-acid sequence, 97 residues long: uncharacterized protein (97 aa).

Positions methionine 1–glycine 21 are cleaved as a signal peptide. Cysteine 22 is lipidated: N-palmitoyl cysteine. A lipid anchor (S-diacylglycerol cysteine) is attached at cysteine 22.

This sequence to B.burgdorferi BBD15.

It is found in the cell membrane. This is an uncharacterized protein from Borreliella burgdorferi (strain ATCC 35210 / DSM 4680 / CIP 102532 / B31) (Borrelia burgdorferi).